The primary structure comprises 420 residues: Transcription activator GLK1 (420 aa).

The segment at 74 to 152 (GDFSNHMNAS…NRISNNEGKR (79 aa)) is disordered. Over residues 106 to 117 (KGEEVVSKRDDV) the composition is skewed to basic and acidic residues. Low complexity predominate over residues 135 to 147 (SSSASSKNNRISN). The segment at residues 150-209 (GKRKVKVDWTPELHRRFVEAVEQLGVDKAVPSRILELMGVHCLTRHNVASHLQKYRSHRK) is a DNA-binding region (myb-like GARP).

As to quaternary structure, interacts with NAC92. Expressed in rosette and cauline leaves. Expressed at low levels in cotyledons and shoots.

The protein resides in the nucleus. Functionally, transcriptional activator that functions with GLK2 to promote chloroplast development. Acts as an activator of nuclear photosynthetic genes involved in chlorophyll biosynthesis, light harvesting, and electron transport. Acts in a cell-autonomous manner to coordinate and maintain the photosynthetic apparatus within individual cells. May function in photosynthetic capacity optimization by integrating responses to variable environmental and endogenous cues. Prevents premature senescence. The sequence is that of Transcription activator GLK1 (GLK1) from Arabidopsis thaliana (Mouse-ear cress).